The following is a 317-amino-acid chain: Beta-ketoacyl-[acyl-carrier-protein] synthase III (317 aa).

Catalysis depends on residues cysteine 112 and histidine 244. The ACP-binding stretch occupies residues 245-249; sequence QANVR. Asparagine 274 is an active-site residue.

It belongs to the thiolase-like superfamily. FabH family. In terms of assembly, homodimer.

Its subcellular location is the cytoplasm. The enzyme catalyses malonyl-[ACP] + acetyl-CoA + H(+) = 3-oxobutanoyl-[ACP] + CO2 + CoA. It functions in the pathway lipid metabolism; fatty acid biosynthesis. Its function is as follows. Catalyzes the condensation reaction of fatty acid synthesis by the addition to an acyl acceptor of two carbons from malonyl-ACP. Catalyzes the first condensation reaction which initiates fatty acid synthesis and may therefore play a role in governing the total rate of fatty acid production. Possesses both acetoacetyl-ACP synthase and acetyl transacylase activities. Its substrate specificity determines the biosynthesis of branched-chain and/or straight-chain of fatty acids. This Rickettsia bellii (strain OSU 85-389) protein is Beta-ketoacyl-[acyl-carrier-protein] synthase III.